The sequence spans 322 residues: tRNA-dihydrouridine synthase B (322 aa).

FMN contacts are provided by residues 16–18 (PMA) and Q70. The active-site Proton donor is the C100. Residues K139, 200 to 202 (NGD), and 224 to 225 (GR) contribute to the FMN site.

Belongs to the Dus family. DusB subfamily. FMN serves as cofactor.

It catalyses the reaction a 5,6-dihydrouridine in tRNA + NAD(+) = a uridine in tRNA + NADH + H(+). It carries out the reaction a 5,6-dihydrouridine in tRNA + NADP(+) = a uridine in tRNA + NADPH + H(+). In terms of biological role, catalyzes the synthesis of 5,6-dihydrouridine (D), a modified base found in the D-loop of most tRNAs, via the reduction of the C5-C6 double bond in target uridines. The polypeptide is tRNA-dihydrouridine synthase B (Vibrio parahaemolyticus serotype O3:K6 (strain RIMD 2210633)).